The primary structure comprises 500 residues: Lysine--tRNA ligase (500 aa).

Residues glutamate 409 and glutamate 416 each contribute to the Mg(2+) site.

The protein belongs to the class-II aminoacyl-tRNA synthetase family. In terms of assembly, homodimer. The cofactor is Mg(2+).

The protein localises to the cytoplasm. It catalyses the reaction tRNA(Lys) + L-lysine + ATP = L-lysyl-tRNA(Lys) + AMP + diphosphate. The chain is Lysine--tRNA ligase from Lysinibacillus sphaericus (strain C3-41).